A 143-amino-acid polypeptide reads, in one-letter code: Small ribosomal subunit protein bS6 (143 aa).

A disordered region spans residues 100-143; that stretch reads SPIIKMKDERREVVELTTSGSEDNQKDHHKEDLDKKTDEFSEEN. Basic and acidic residues-rich tracts occupy residues 104–113 and 122–143; these read KMKDERREVV and DNQKDHHKEDLDKKTDEFSEEN.

Belongs to the bacterial ribosomal protein bS6 family.

Its function is as follows. Binds together with bS18 to 16S ribosomal RNA. This chain is Small ribosomal subunit protein bS6, found in Hamiltonella defensa subsp. Acyrthosiphon pisum (strain 5AT).